Consider the following 109-residue polypeptide: Guanylate cyclase activator 2B (109 aa).

Residues 1 to 23 (MKVLALPVAVAAMLLVLAQNTQS) form the signal peptide. Residues 24-94 (VYIQYEGFQV…NIFRALRSIS (71 aa)) constitute a propeptide that is removed on maturation. 3 disulfides stabilise this stretch: cysteine 65–cysteine 78, cysteine 98–cysteine 106, and cysteine 101–cysteine 109.

Belongs to the guanylin family. In terms of tissue distribution, small and large intestine and atria and ventricles of heart. Both uroguanylin and prouroguanylin are found in plasma.

The protein localises to the secreted. Functionally, endogenous activator of intestinal guanylate cyclase. It stimulates this enzyme through the same receptor binding region as the heat-stable enterotoxins. May be a potent physiological regulator of intestinal fluid and electrolyte transport. May be an autocrine/paracrine regulator of intestinal salt and water transport. The polypeptide is Guanylate cyclase activator 2B (GUCA2B) (Didelphis virginiana (North American opossum)).